We begin with the raw amino-acid sequence, 418 residues long: Somatostatin receptor type 3 (418 aa).

The tract at residues M1–A21 is disordered. Topologically, residues M1–S43 are extracellular. Residues S7–S20 are compositionally biased toward polar residues. N-linked (GlcNAc...) asparagine glycosylation is found at N17 and N30. A helical transmembrane segment spans residues G44 to V69. At L70–T79 the chain is on the cytoplasmic side. The helical transmembrane segment at N80–A101 threads the bilayer. Topologically, residues A102–C116 are extracellular. C116 and C191 are joined by a disulfide. The chain crosses the membrane as a helical span at residues R117–S138. Residues V139–R161 lie on the Cytoplasmic side of the membrane. A helical membrane pass occupies residues T162–F181. Residues S182–G205 are Extracellular-facing. A helical membrane pass occupies residues F206–V231. Topologically, residues K232 to R257 are cytoplasmic. The chain crosses the membrane as a helical span at residues M258–V279. The Extracellular segment spans residues N280 to G293. Residues L294–L316 traverse the membrane as a helical segment. The Cytoplasmic segment spans residues S317–L418. 2 positions are modified to phosphoserine: S332 and S337. The segment at V335–L418 is disordered. At T348 the chain carries Phosphothreonine. Over residues T348–E360 the composition is skewed to acidic residues. The span at S361–N371 shows a compositional bias: basic and acidic residues. Polar residues-rich tracts occupy residues R373–Q385 and K395–L418.

It belongs to the G-protein coupled receptor 1 family. In terms of assembly, homodimer and heterodimer with SSTR2. Heterodimerization with SSTR2 inactivates SSTR3 receptor function. In terms of processing, phosphorylated. Phosphorylation increases upon somatostatin binding. Brain, pituitary and pancreas.

Its subcellular location is the cell membrane. Functionally, receptor for somatostatin-14 and -28. This receptor is coupled via pertussis toxin sensitive G proteins to inhibition of adenylyl cyclase. The protein is Somatostatin receptor type 3 (SSTR3) of Homo sapiens (Human).